We begin with the raw amino-acid sequence, 222 residues long: Probable transaldolase (222 aa).

Residue Lys-91 is the Schiff-base intermediate with substrate of the active site.

This sequence belongs to the transaldolase family. Type 3B subfamily.

The protein resides in the cytoplasm. It carries out the reaction D-sedoheptulose 7-phosphate + D-glyceraldehyde 3-phosphate = D-erythrose 4-phosphate + beta-D-fructose 6-phosphate. Its pathway is carbohydrate degradation; pentose phosphate pathway; D-glyceraldehyde 3-phosphate and beta-D-fructose 6-phosphate from D-ribose 5-phosphate and D-xylulose 5-phosphate (non-oxidative stage): step 2/3. In terms of biological role, transaldolase is important for the balance of metabolites in the pentose-phosphate pathway. This chain is Probable transaldolase, found in Chlorobaculum parvum (strain DSM 263 / NCIMB 8327) (Chlorobium vibrioforme subsp. thiosulfatophilum).